Consider the following 344-residue polypeptide: uncharacterized protein (344 aa).

This is an uncharacterized protein from Aquifex aeolicus (strain VF5).